The primary structure comprises 360 residues: Coiled-coil domain-containing protein 86 (360 aa).

The span at 1 to 12 shows a compositional bias: basic residues; sequence MDTPLRRSRRLG. 2 disordered regions span residues 1–314 and 328–360; these read MDTP…ENER and LKRA…AAKI. Phosphoserine is present on residues Ser-21, Ser-24, Ser-47, Ser-50, and Ser-58. The residue at position 65 (Thr-65) is a Phosphothreonine. A phosphoserine mark is found at Ser-66, Ser-69, Ser-80, Ser-91, Ser-102, Ser-110, Ser-113, and Ser-128. The span at 66–83 shows a compositional bias: polar residues; the sequence is SPGSPRLQQGSGLESPQG. The segment covering 153–164 has biased composition (pro residues); sequence QLPPVPGSPEPY. Residues Ser-188, Ser-217, and Ser-218 each carry the phosphoserine modification. The span at 238–254 shows a compositional bias: basic residues; sequence GKPKSGRVWKDRSKKRF. Residues 272–323 are a coiled coil; that stretch reads KERQERKLAKDFARHLEEEKERRRQEKKQRRAENLKRRLENERKAEVVQVIR. Composition is skewed to basic and acidic residues over residues 273–295 and 302–314; these read ERQE…ERRR and RAEN…ENER. Arg-342 carries the citrulline modification.

In terms of processing, citrullinated by PADI4.

It is found in the nucleus. The protein localises to the chromosome. The protein resides in the nucleolus. Its function is as follows. Required for proper chromosome segregation during mitosis and error-free mitotic progression. This is Coiled-coil domain-containing protein 86 from Pongo abelii (Sumatran orangutan).